A 276-amino-acid chain; its full sequence is Tumor necrosis factor-inducible gene 6 protein (276 aa).

A signal peptide spans methionine 1–glycine 17. The Link domain maps to glycine 36 to asparagine 129. Disulfide bonds link cysteine 58/cysteine 127, cysteine 82/cysteine 103, and cysteine 135/cysteine 161. Asparagine 118 carries an N-linked (GlcNAc...) asparagine glycan. The CUB domain occupies cysteine 135 to valine 247. The Ca(2+) site is built by glutamate 183, aspartate 191, aspartate 232, serine 234, and valine 235. The cysteines at positions 188 and 210 are disulfide-linked. An N-linked (GlcNAc...) asparagine glycan is attached at asparagine 258.

Interacts (via Link domain) with inter-alpha-inhibitor (I-alpha-I) component bikunin. Interacts with ITIH2/HC2; this interaction is required for transesterification of the HC to hyaluronan. Interacts (via Link and CUB domains) with ITIH1. Chondroitin sulfate may be required for the stability of the complex. Interacts (via Link domain) with various C-X-C and C-C chemokines including PF4, CXCL8, CXCL11, CXCL12, CCL2, CCL7, CCL19, CCL21, and CCL27; this interaction interferes with chemokine binding to glycosaminoglycans. Interacts (primarily via Link domain) with BMP2; this interaction is inhibited by hyaluronan. Interacts (via both Link and CUB domains) with TNFSF11. Interacts (via CUB domain) with FN1 (via type III repeats 9-14); this interaction enhances fibronectin fibril assembly. TNFAIP6 may act as a bridging molecule between FN1 and THBS1. As to expression, vascular smooth muscle cells.

It localises to the secreted. Functionally, major regulator of extracellular matrix organization during tissue remodeling. Catalyzes the transfer of a heavy chain (HC) from inter-alpha-inhibitor (I-alpha-I) complex to hyaluronan. Cleaves the ester bond between the C-terminus of the HC and GalNAc residue of the chondroitin sulfate chain in I-alpha-I complex followed by transesterification of the HC to hyaluronan. In the process, potentiates the antiprotease function of I-alpha-I complex through release of free bikunin. Acts as a catalyst in the formation of hyaluronan-HC oligomers and hyaluronan-rich matrix surrounding the cumulus cell-oocyte complex, a necessary step for oocyte fertilization. Assembles hyaluronan in pericellular matrices that serve as platforms for receptor clustering and signaling. Enables binding of hyaluronan deposited on the surface of macrophages to LYVE1 on lymphatic endothelium and facilitates macrophage extravasation. Alters hyaluronan binding to functionally latent CD44 on vascular endothelium, switching CD44 into an active state that supports leukocyte rolling. Modulates the interaction of chemokines with extracellular matrix components and proteoglycans on endothelial cell surface, likely preventing chemokine gradient formation. In a negative feedback mechanism, may limit excessive neutrophil recruitment at inflammatory sites by antagonizing the association of CXCL8 with glycosaminoglycans on vascular endothelium. Has a role in osteogenesis and bone remodeling. Inhibits BMP2-dependent differentiation of mesenchymal stem cell to osteoblasts. Protects against bone erosion during inflammation by inhibiting TNFSF11/RANKL-dependent osteoclast activation. In Oryctolagus cuniculus (Rabbit), this protein is Tumor necrosis factor-inducible gene 6 protein (TNFAIP6).